Here is a 513-residue protein sequence, read N- to C-terminus: CUGBP Elav-like family member 1 (513 aa).

At T31 the chain carries Phosphothreonine. 2 RRM domains span residues 43 to 126 and 135 to 215; these read IKMF…PADS and RKLF…FADT. K136 participates in a covalent cross-link: Glycyl lysine isopeptide (Lys-Gly) (interchain with G-Cter in SUMO2). Phosphoserine is present on residues S206 and S329. The disordered stretch occupies residues 304–336; sequence TPSGTNALTTSSSPLSVLTSSGSSPSSSSSNSV. The segment covering 311 to 336 has biased composition (low complexity); sequence LTTSSSPLSVLTSSGSSPSSSSSNSV. An RRM 3 domain is found at 428 to 506; that stretch reads ANLFIYHLPQ…KRLKVQLKRS (79 aa).

Belongs to the CELF/BRUNOL family. As to quaternary structure, associates with polysomes. Interacts with HNRNPH1; the interaction in RNA-dependent. Interacts with PARN. Component of an EIF2 complex at least composed of CELF1/CUGBP1, CALR, CALR3, EIF2S1, EIF2S2, HSP90B1 and HSPA5.

It localises to the nucleus. It is found in the cytoplasm. Its function is as follows. RNA-binding protein implicated in the regulation of several post-transcriptional events. Involved in pre-mRNA alternative splicing, mRNA translation and stability. Mediates exon inclusion and/or exclusion in pre-mRNA that are subject to tissue-specific and developmentally regulated alternative splicing. Specifically activates exon 5 inclusion of cardiac isoforms of TNNT2 during heart remodeling at the juvenile to adult transition. Acts both as an activator and as a repressor of a pair of coregulated exons: promotes inclusion of the smooth muscle (SM) exon but exclusion of the non-muscle (NM) exon in actinin pre-mRNAs. Activates SM exon 5 inclusion by antagonizing the repressive effect of PTB. Promotes exclusion of exon 11 of the INSR pre-mRNA. Inhibits, together with HNRNPH1, insulin receptor (IR) pre-mRNA exon 11 inclusion in myoblast. Increases translation and controls the choice of translation initiation codon of CEBPB mRNA. Increases mRNA translation of CEBPB in aging liver. Increases translation of CDKN1A mRNA by antagonizing the repressive effect of CALR3. Mediates rapid cytoplasmic mRNA deadenylation. Recruits the deadenylase PARN to the poly(A) tail of EDEN-containing mRNAs to promote their deadenylation. Required for completion of spermatogenesis. Binds to (CUG)n triplet repeats in the 3'-UTR of transcripts such as DMPK and to Bruno response elements (BREs). Binds to muscle-specific splicing enhancer (MSE) intronic sites flanking the alternative exon 5 of TNNT2 pre-mRNA. Binds to AU-rich sequences (AREs or EDEN-like) localized in the 3'-UTR of JUN and FOS mRNAs. Binds to the IR RNA. Binds to the 5'-region of CDKN1A and CEBPB mRNAs. Binds with the 5'-region of CEBPB mRNA in aging liver. May be a specific regulator of miRNA biogenesis. Binds to primary microRNA pri-MIR140 and, with CELF2, negatively regulates the processing to mature miRNA. This is CUGBP Elav-like family member 1 (CELF1) from Pongo abelii (Sumatran orangutan).